We begin with the raw amino-acid sequence, 354 residues long: Histidinol-phosphate aminotransferase 1 (354 aa).

Lysine 209 is subject to N6-(pyridoxal phosphate)lysine.

Belongs to the class-II pyridoxal-phosphate-dependent aminotransferase family. Histidinol-phosphate aminotransferase subfamily. As to quaternary structure, homodimer. Pyridoxal 5'-phosphate is required as a cofactor.

It carries out the reaction L-histidinol phosphate + 2-oxoglutarate = 3-(imidazol-4-yl)-2-oxopropyl phosphate + L-glutamate. Its pathway is amino-acid biosynthesis; L-histidine biosynthesis; L-histidine from 5-phospho-alpha-D-ribose 1-diphosphate: step 7/9. The protein is Histidinol-phosphate aminotransferase 1 (hisC1) of Oceanobacillus iheyensis (strain DSM 14371 / CIP 107618 / JCM 11309 / KCTC 3954 / HTE831).